The primary structure comprises 202 residues: MADS-box transcription factor 33 (202 aa).

In terms of domain architecture, MADS-box spans 1–61; that stretch reads MVRGKVQMRR…GKLHELATNG (61 aa). The K-box domain maps to 87–177; it reads QQVAEQGIFL…QEKVKEQQKL (91 aa).

As to expression, expressed in seedling roots.

Its subcellular location is the nucleus. Functionally, probable transcription factor. This is MADS-box transcription factor 33 (MADS33) from Oryza sativa subsp. japonica (Rice).